The primary structure comprises 375 residues: Aminomethyltransferase (375 aa).

The protein belongs to the GcvT family. As to quaternary structure, the glycine cleavage system is composed of four proteins: P, T, L and H.

The catalysed reaction is N(6)-[(R)-S(8)-aminomethyldihydrolipoyl]-L-lysyl-[protein] + (6S)-5,6,7,8-tetrahydrofolate = N(6)-[(R)-dihydrolipoyl]-L-lysyl-[protein] + (6R)-5,10-methylene-5,6,7,8-tetrahydrofolate + NH4(+). Functionally, the glycine cleavage system catalyzes the degradation of glycine. The sequence is that of Aminomethyltransferase from Symbiobacterium thermophilum (strain DSM 24528 / JCM 14929 / IAM 14863 / T).